The following is a 106-amino-acid chain: Large ribosomal subunit protein P1 (106 aa).

The interval 69–106 (AAAAAPAEEAKEEAKEEEEEEEEVKEEEAIEGLGALFG) is disordered. Positions 83 to 98 (KEEEEEEEEVKEEEAI) are enriched in acidic residues.

This sequence belongs to the eukaryotic ribosomal protein P1/P2 family. In terms of assembly, part of the 50S ribosomal subunit. Homodimer, it forms part of the ribosomal stalk which helps the ribosome interact with GTP-bound translation factors. Forms a heptameric uL10/P0(P1)2(P1)2(P1)2 complex, where uL10/P0 forms an elongated spine to which the P1 dimers bind in a sequential fashion.

In terms of biological role, forms part of the ribosomal stalk, playing a central role in the interaction of the ribosome with GTP-bound translation factors. This Archaeoglobus fulgidus (strain ATCC 49558 / DSM 4304 / JCM 9628 / NBRC 100126 / VC-16) protein is Large ribosomal subunit protein P1.